The primary structure comprises 160 residues: Probable transcriptional regulator YgiV (160 aa).

Its function is as follows. Represses expression of mcbR. The protein is Probable transcriptional regulator YgiV (ygiV) of Escherichia coli (strain K12).